Reading from the N-terminus, the 126-residue chain is Late histone H2A.L3 (126 aa).

Positions 1 to 20 (MSGRGKGAGKARAKAKSRSA) are disordered. N-acetylserine is present on Ser2. Position 2 is a phosphoserine (Ser2). A compositionally biased stretch (basic residues) spans 7-19 (GAGKARAKAKSRS). At Gln105 the chain carries N5-methylglutamine. Lys120 participates in a covalent cross-link: Glycyl lysine isopeptide (Lys-Gly) (interchain with G-Cter in ubiquitin).

It belongs to the histone H2A family. The nucleosome is a histone octamer containing two molecules each of H2A, H2B, H3 and H4 assembled in one H3-H4 heterotetramer and two H2A-H2B heterodimers. The octamer wraps approximately 147 bp of DNA. Post-translationally, monoubiquitination of Lys-120 gives a specific tag for epigenetic transcriptional repression. In terms of processing, phosphorylation of Ser-2 directly represses transcription.

It localises to the nucleus. Its subcellular location is the chromosome. Core component of nucleosome. Nucleosomes wrap and compact DNA into chromatin, limiting DNA accessibility to the cellular machineries which require DNA as a template. Histones thereby play a central role in transcription regulation, DNA repair, DNA replication and chromosomal stability. DNA accessibility is regulated via a complex set of post-translational modifications of histones, also called histone code, and nucleosome remodeling. In Strongylocentrotus purpuratus (Purple sea urchin), this protein is Late histone H2A.L3.